Consider the following 1233-residue polypeptide: ATP-dependent helicase/nuclease subunit A (1233 aa).

The region spanning 3–474 is the UvrD-like helicase ATP-binding domain; sequence TKWTEEQKQA…ILLYKNFRSR (472 aa). 24–31 lines the ATP pocket; that stretch reads AAAGSGKT. The region spanning 518 to 809 is the UvrD-like helicase C-terminal domain; sequence VTGGAVELHL…RIMSIHKSKG (292 aa). The tract at residues 533-555 is disordered; it reads VEEEVEEKEEEKNEEKDFEEEEE.

This sequence belongs to the helicase family. AddA subfamily. As to quaternary structure, heterodimer of AddA and AddB/RexB. Requires Mg(2+) as cofactor.

The enzyme catalyses Couples ATP hydrolysis with the unwinding of duplex DNA by translocating in the 3'-5' direction.. It catalyses the reaction ATP + H2O = ADP + phosphate + H(+). Its function is as follows. The heterodimer acts as both an ATP-dependent DNA helicase and an ATP-dependent, dual-direction single-stranded exonuclease. Recognizes the chi site generating a DNA molecule suitable for the initiation of homologous recombination. The AddA nuclease domain is required for chi fragment generation; this subunit has the helicase and 3' -&gt; 5' nuclease activities. This chain is ATP-dependent helicase/nuclease subunit A, found in Thermoanaerobacter sp. (strain X514).